The sequence spans 228 residues: Protein slowmo homolog (228 aa).

The 172-residue stretch at 1 to 172 (MPLFETIKHT…TIIKVQKEAE (172 aa)) folds into the PRELI/MSF1 domain.

Belongs to the slowmo family.

The sequence is that of Protein slowmo homolog (slmo) from Dictyostelium discoideum (Social amoeba).